The sequence spans 346 residues: Small ribosomal subunit biogenesis GTPase RsgA (346 aa).

The interval 1–26 (MAKRKLTQNQTRRIQSNNAKTLHRHK) is disordered. The segment covering 7 to 20 (TQNQTRRIQSNNAK) has biased composition (polar residues). In terms of domain architecture, CP-type G spans 103–271 (ENEISRPDYY…LIDSPGIREF (169 aa)). GTP is bound by residues 159-162 (NKVD) and 213-221 (GQSGVGKSS). Zn(2+) is bound by residues C295, C300, H302, and C308.

It belongs to the TRAFAC class YlqF/YawG GTPase family. RsgA subfamily. In terms of assembly, monomer. Associates with 30S ribosomal subunit, binds 16S rRNA. Zn(2+) serves as cofactor.

The protein localises to the cytoplasm. Its function is as follows. One of several proteins that assist in the late maturation steps of the functional core of the 30S ribosomal subunit. Helps release RbfA from mature subunits. May play a role in the assembly of ribosomal proteins into the subunit. Circularly permuted GTPase that catalyzes slow GTP hydrolysis, GTPase activity is stimulated by the 30S ribosomal subunit. This chain is Small ribosomal subunit biogenesis GTPase RsgA, found in Haemophilus influenzae (strain PittEE).